The following is a 442-amino-acid chain: Cyclic AMP receptor-like protein B (442 aa).

Over 1-16 (MGGDIHLCSMILGKNH) the chain is Extracellular. Residues 17–37 (LIFLYFANLFGSTLSFLATII) form a helical membrane-spanning segment. At 38-219 (TIVFYLVKKY…PKKIDTLIFY (182 aa)) the chain is on the cytoplasmic side. The interval 83–166 (YSSTPISIQN…LSSSDKNNTI (84 aa)) is disordered. The segment covering 91–103 (QNNNNKNNNLPKQ) has biased composition (low complexity). Polar residues predominate over residues 112 to 122 (INKNHNNYCNY). Low complexity predominate over residues 123–144 (STSATSSSSSSSSFSSTNSGSS). Residues 145–166 (YEYQQPQKNQQTLSSSDKNNTI) show a composition bias toward polar residues. Residues 220–240 (LSISDFIAVSGIIIEQLIIIF) form a helical membrane-spanning segment. Residues 241–255 (NKEISKSIGFCIGER) are Extracellular-facing. A helical transmembrane segment spans residues 256 to 276 (VSIHFGLLATLFWSNCIAYYL). The Cytoplasmic segment spans residues 277-289 (LRETYELKPYNIR). The helical transmembrane segment at 290–310 (FVYFHIVCWGMALIGVASLFF) threads the bilayer. Residues 311–334 (SKIITVSNIDQGGSWCSVSSSYQL) lie on the Extracellular side of the membrane. A helical transmembrane segment spans residues 335-355 (YFWVIPLFVSFTWNLICYCLI). Over 356–382 (YRKFNKIIGIYGIQSVQIKTIIIRKLS) the chain is Cytoplasmic. Residues 383-403 (FYLLAFLITWVWDVINNSIFL) form a helical membrane-spanning segment. The Extracellular segment spans residues 404–410 (YEGKCPP). A helical membrane pass occupies residues 411–431 (FALWILQEFFSSGYGFFNSLA). Topologically, residues 432–442 (YAVTTRFYSRK) are cytoplasmic.

This sequence belongs to the G-protein coupled receptor 5 family.

It localises to the membrane. Functionally, receptor for cAMP. The sequence is that of Cyclic AMP receptor-like protein B (crlB) from Dictyostelium discoideum (Social amoeba).